Consider the following 553-residue polypeptide: ATP synthase F(1) complex subunit alpha, mitochondrial (553 aa).

A mitochondrion-targeting transit peptide spans 1-43 (MLSVRVAAAVVRALPRRAGLVSRNALGSSFIAARNFHASNTHL). Ser-53 and Ser-65 each carry phosphoserine. Ser-76 carries the post-translational modification Phosphoserine; alternate. Residue Ser-76 is glycosylated (O-linked (GlcNAc) serine; alternate). The residue at position 106 (Ser-106) is a Phosphoserine. An N6-acetyllysine mark is found at Lys-123, Lys-126, and Lys-132. Thr-134 is subject to Phosphothreonine. Lys-161 is subject to N6-acetyllysine; alternate. At Lys-161 the chain carries N6-succinyllysine; alternate. A Phosphoserine modification is found at Ser-166. At Lys-167 the chain carries N6-acetyllysine; alternate. N6-succinyllysine; alternate is present on Lys-167. Position 184 is a phosphoserine (Ser-184). Arg-204 is modified (omega-N-methylarginine). ATP is bound by residues Gln-215, Gly-217, Lys-218, Thr-219, and Ser-220. Thr-219 serves as a coordination point for Mg(2+). Residues Lys-230 and Lys-239 each carry the N6-acetyllysine; alternate modification. Residues Lys-230 and Lys-239 each carry the N6-succinyllysine; alternate modification. Residue Lys-240 is modified to N6-acetyllysine. Lys-261 and Lys-305 each carry N6-acetyllysine; alternate. Lys-261 and Lys-305 each carry N6-succinyllysine; alternate. Asp-312 contacts Mg(2+). N6-acetyllysine; alternate is present on Lys-427. Lys-427 carries the N6-succinyllysine; alternate modification. At Lys-434 the chain carries N6-acetyllysine. Gln-473 and Gln-475 together coordinate ATP. Residues Lys-498, Lys-506, Lys-531, and Lys-539 each carry the N6-acetyllysine; alternate modification. N6-succinyllysine; alternate occurs at positions 498, 506, 531, and 539. Lys-541 bears the N6-acetyllysine mark.

This sequence belongs to the ATPase alpha/beta chains family. Homotrimer. Component of the ATP synthase complex composed at least of ATP5F1A/subunit alpha, ATP5F1B/subunit beta, ATP5MC1/subunit c (homooctomer), MT-ATP6/subunit a, MT-ATP8/subunit 8, ATP5ME/subunit e, ATP5MF/subunit f, ATP5MG/subunit g, ATP5MK/subunit k, ATP5MJ/subunit j, ATP5F1C/subunit gamma, ATP5F1D/subunit delta, ATP5F1E/subunit epsilon, ATP5PF/subunit F6, ATP5PB/subunit b, ATP5PD/subunit d, ATP5PO/subunit OSCP. ATP synthase complex consists of a soluble F(1) head domain (subunits alpha(3) and beta(3)) - the catalytic core - and a membrane F(0) domain - the membrane proton channel (subunits c, a, 8, e, f, g, k and j). These two domains are linked by a central stalk (subunits gamma, delta, and epsilon) rotating inside the F1 region and a stationary peripheral stalk (subunits F6, b, d, and OSCP). Interacts with ATPAF2. Interacts with HRG; the interaction occurs on the surface of T-cells and alters the cell morphology when associated with concanavalin (in vitro). Interacts with PLG (angiostatin peptide); the interaction inhibits most of the angiogenic properties of angiostatin. Interacts with BLOC1S1. Interacts with BCL2L1 isoform BCL-X(L); the interaction mediates the association of BCL2L1 isoform BCL-X(L) with the mitochondrial membrane F(1)F(0) ATP synthase and enhances neurons metabolic efficiency. Interacts with CLN5 and PPT1. Interacts with S100A1; this interaction increases F1-ATPase activity. Interacts with ABCB7; this interaction allows the regulation of cellular iron homeostasis and cellular reactive oxygen species (ROS) levels in cardiomyocytes. Post-translationally, acetylated on lysine residues. BLOC1S1 is required for acetylation.

The protein localises to the mitochondrion inner membrane. It is found in the cell membrane. Subunit alpha, of the mitochondrial membrane ATP synthase complex (F(1)F(0) ATP synthase or Complex V) that produces ATP from ADP in the presence of a proton gradient across the membrane which is generated by electron transport complexes of the respiratory chain. ATP synthase complex consist of a soluble F(1) head domain - the catalytic core - and a membrane F(1) domain - the membrane proton channel. These two domains are linked by a central stalk rotating inside the F(1) region and a stationary peripheral stalk. During catalysis, ATP synthesis in the catalytic domain of F(1) is coupled via a rotary mechanism of the central stalk subunits to proton translocation. In vivo, can only synthesize ATP although its ATP hydrolase activity can be activated artificially in vitro. With the catalytic subunit beta (ATP5F1B), forms the catalytic core in the F(1) domain. Subunit alpha does not bear the catalytic high-affinity ATP-binding sites. This chain is ATP synthase F(1) complex subunit alpha, mitochondrial, found in Pongo abelii (Sumatran orangutan).